The chain runs to 202 residues: Probable pathogenesis-related protein CaO19.2336 (202 aa).

An N-terminal signal peptide occupies residues 1–20 (MKTLLFIYLQLLLLLSIIIG). N-linked (GlcNAc...) asparagine glycosylation is found at Asn-58 and Asn-152. The region spanning 66 to 179 (LKEHNNKRKL…LNALYIVCSY (114 aa)) is the SCP domain.

Belongs to the CRISP family.

It is found in the secreted. In terms of biological role, secreted protein that acts as a virulence factor during infections. This chain is Probable pathogenesis-related protein CaO19.2336, found in Candida albicans (strain SC5314 / ATCC MYA-2876) (Yeast).